We begin with the raw amino-acid sequence, 301 residues long: Sulfate adenylyltransferase subunit 2 (301 aa).

The segment at 279-301 (RQGRLIDHDQDGSMEKKKQEGYF) is disordered.

It belongs to the PAPS reductase family. CysD subfamily. In terms of assembly, heterodimer composed of CysD, the smaller subunit, and CysN.

The enzyme catalyses sulfate + ATP + H(+) = adenosine 5'-phosphosulfate + diphosphate. It participates in sulfur metabolism; hydrogen sulfide biosynthesis; sulfite from sulfate: step 1/3. Its function is as follows. With CysN forms the ATP sulfurylase (ATPS) that catalyzes the adenylation of sulfate producing adenosine 5'-phosphosulfate (APS) and diphosphate, the first enzymatic step in sulfur assimilation pathway. APS synthesis involves the formation of a high-energy phosphoric-sulfuric acid anhydride bond driven by GTP hydrolysis by CysN coupled to ATP hydrolysis by CysD. This is Sulfate adenylyltransferase subunit 2 from Geotalea uraniireducens (strain Rf4) (Geobacter uraniireducens).